The primary structure comprises 358 residues: Holliday junction branch migration complex subunit RuvB (358 aa).

The segment at 1 to 24 is disordered; it reads MSIQTDDFAAPPPKRILSGAPASP. The tract at residues 5–194 is large ATPase domain (RuvB-L); sequence TDDFAAPPPK…FGIVARLEFY (190 aa). ATP contacts are provided by residues Leu-33, Arg-34, Gly-75, Lys-78, Thr-79, Thr-80, 141-143, Arg-184, Tyr-194, and Arg-231; that span reads EDY. Residue Thr-79 coordinates Mg(2+). The interval 195 to 265 is small ATPAse domain (RuvB-S); sequence SPEELASIVR…IAHRALVMLD (71 aa). A head domain (RuvB-H) region spans residues 268 to 358; it reads PQGFDLMDRK…GDMFGAMRPE (91 aa). Residues Arg-304, Arg-323, and Arg-328 each coordinate DNA.

This sequence belongs to the RuvB family. As to quaternary structure, homohexamer. Forms an RuvA(8)-RuvB(12)-Holliday junction (HJ) complex. HJ DNA is sandwiched between 2 RuvA tetramers; dsDNA enters through RuvA and exits via RuvB. An RuvB hexamer assembles on each DNA strand where it exits the tetramer. Each RuvB hexamer is contacted by two RuvA subunits (via domain III) on 2 adjacent RuvB subunits; this complex drives branch migration. In the full resolvosome a probable DNA-RuvA(4)-RuvB(12)-RuvC(2) complex forms which resolves the HJ.

The protein resides in the cytoplasm. The enzyme catalyses ATP + H2O = ADP + phosphate + H(+). Its function is as follows. The RuvA-RuvB-RuvC complex processes Holliday junction (HJ) DNA during genetic recombination and DNA repair, while the RuvA-RuvB complex plays an important role in the rescue of blocked DNA replication forks via replication fork reversal (RFR). RuvA specifically binds to HJ cruciform DNA, conferring on it an open structure. The RuvB hexamer acts as an ATP-dependent pump, pulling dsDNA into and through the RuvAB complex. RuvB forms 2 homohexamers on either side of HJ DNA bound by 1 or 2 RuvA tetramers; 4 subunits per hexamer contact DNA at a time. Coordinated motions by a converter formed by DNA-disengaged RuvB subunits stimulates ATP hydrolysis and nucleotide exchange. Immobilization of the converter enables RuvB to convert the ATP-contained energy into a lever motion, pulling 2 nucleotides of DNA out of the RuvA tetramer per ATP hydrolyzed, thus driving DNA branch migration. The RuvB motors rotate together with the DNA substrate, which together with the progressing nucleotide cycle form the mechanistic basis for DNA recombination by continuous HJ branch migration. Branch migration allows RuvC to scan DNA until it finds its consensus sequence, where it cleaves and resolves cruciform DNA. This Albidiferax ferrireducens (strain ATCC BAA-621 / DSM 15236 / T118) (Rhodoferax ferrireducens) protein is Holliday junction branch migration complex subunit RuvB.